The following is a 155-amino-acid chain: Endoribonuclease YbeY (155 aa).

Zn(2+) is bound by residues His-114, His-118, and His-124.

This sequence belongs to the endoribonuclease YbeY family. Requires Zn(2+) as cofactor.

The protein resides in the cytoplasm. Single strand-specific metallo-endoribonuclease involved in late-stage 70S ribosome quality control and in maturation of the 3' terminus of the 16S rRNA. The protein is Endoribonuclease YbeY of Photorhabdus laumondii subsp. laumondii (strain DSM 15139 / CIP 105565 / TT01) (Photorhabdus luminescens subsp. laumondii).